Consider the following 216-residue polypeptide: Protein-L-isoaspartate O-methyltransferase (216 aa).

S62 is a catalytic residue.

Belongs to the methyltransferase superfamily. L-isoaspartyl/D-aspartyl protein methyltransferase family.

The protein localises to the cytoplasm. The catalysed reaction is [protein]-L-isoaspartate + S-adenosyl-L-methionine = [protein]-L-isoaspartate alpha-methyl ester + S-adenosyl-L-homocysteine. Catalyzes the methyl esterification of L-isoaspartyl residues in peptides and proteins that result from spontaneous decomposition of normal L-aspartyl and L-asparaginyl residues. It plays a role in the repair and/or degradation of damaged proteins. This Methanospirillum hungatei JF-1 (strain ATCC 27890 / DSM 864 / NBRC 100397 / JF-1) protein is Protein-L-isoaspartate O-methyltransferase.